The chain runs to 201 residues: Ras-related protein RabA (201 aa).

15 to 22 is a GTP binding site; the sequence is GDSGVGKS. An Effector region motif is present at residues 37-45; the sequence is YISTIGVDF. GTP contacts are provided by residues 63–67 and 121–124; these read DTAGQ and NKSD. A Cysteine methyl ester modification is found at cysteine 198. Cysteine 198 carries S-geranylgeranyl cysteine lipidation. The propeptide at 199–201 is removed in mature form; the sequence is IIN.

This sequence belongs to the small GTPase superfamily. Rab family.

It localises to the cell membrane. This is Ras-related protein RabA (rabA) from Dictyostelium discoideum (Social amoeba).